Here is a 277-residue protein sequence, read N- to C-terminus: Energy-coupling factor transporter ATP-binding protein EcfA1 (277 aa).

The region spanning 4-238 (IETQDLCHTY…PDLLSSVRLD (235 aa)) is the ABC transporter domain. 37-44 (GPNGAGKS) is a binding site for ATP.

The protein belongs to the ABC transporter superfamily. Energy-coupling factor EcfA family. Forms a stable energy-coupling factor (ECF) transporter complex composed of 2 membrane-embedded substrate-binding proteins (S component), 2 ATP-binding proteins (A component) and 2 transmembrane proteins (T component).

It is found in the cell membrane. Functionally, ATP-binding (A) component of a common energy-coupling factor (ECF) ABC-transporter complex. Unlike classic ABC transporters this ECF transporter provides the energy necessary to transport a number of different substrates. This is Energy-coupling factor transporter ATP-binding protein EcfA1 from Methanospirillum hungatei JF-1 (strain ATCC 27890 / DSM 864 / NBRC 100397 / JF-1).